Here is a 209-residue protein sequence, read N- to C-terminus: Uracil phosphoribosyltransferase (209 aa).

5-phospho-alpha-D-ribose 1-diphosphate contacts are provided by residues R79, R104, and 131-139; that span reads DPMLATGGS. Uracil contacts are provided by residues I194 and 199 to 201; that span reads GDA. D200 provides a ligand contact to 5-phospho-alpha-D-ribose 1-diphosphate.

Belongs to the UPRTase family. Mg(2+) is required as a cofactor.

It catalyses the reaction UMP + diphosphate = 5-phospho-alpha-D-ribose 1-diphosphate + uracil. The protein operates within pyrimidine metabolism; UMP biosynthesis via salvage pathway; UMP from uracil: step 1/1. With respect to regulation, allosterically activated by GTP. In terms of biological role, catalyzes the conversion of uracil and 5-phospho-alpha-D-ribose 1-diphosphate (PRPP) to UMP and diphosphate. The polypeptide is Uracil phosphoribosyltransferase (Streptococcus suis (strain 05ZYH33)).